The primary structure comprises 185 residues: Ribosome-recycling factor (185 aa).

Belongs to the RRF family.

Its subcellular location is the cytoplasm. Functionally, responsible for the release of ribosomes from messenger RNA at the termination of protein biosynthesis. May increase the efficiency of translation by recycling ribosomes from one round of translation to another. This is Ribosome-recycling factor from Streptococcus pneumoniae serotype 2 (strain D39 / NCTC 7466).